The sequence spans 269 residues: Diaminopimelate epimerase (269 aa).

Asparagine 13, glutamine 46, and asparagine 65 together coordinate substrate. Residue cysteine 74 is the Proton donor of the active site. Substrate is bound by residues glycine 75–asparagine 76, asparagine 149, asparagine 182, and glutamate 200–arginine 201. The Proton acceptor role is filled by cysteine 209. Glycine 210 to threonine 211 contacts substrate.

Belongs to the diaminopimelate epimerase family. In terms of assembly, homodimer.

The protein localises to the cytoplasm. It carries out the reaction (2S,6S)-2,6-diaminopimelate = meso-2,6-diaminopimelate. It participates in amino-acid biosynthesis; L-lysine biosynthesis via DAP pathway; DL-2,6-diaminopimelate from LL-2,6-diaminopimelate: step 1/1. Its function is as follows. Catalyzes the stereoinversion of LL-2,6-diaminopimelate (L,L-DAP) to meso-diaminopimelate (meso-DAP), a precursor of L-lysine and an essential component of the bacterial peptidoglycan. The protein is Diaminopimelate epimerase of Zymomonas mobilis subsp. mobilis (strain ATCC 31821 / ZM4 / CP4).